Reading from the N-terminus, the 558-residue chain is ATP synthase subunit alpha (558 aa).

172 to 179 (GDRKTGKT) is a binding site for ATP. The interval 536-558 (ESVKVHQAIPAKTSEKSKNSTPR) is disordered. The segment covering 548 to 558 (TSEKSKNSTPR) has biased composition (basic and acidic residues).

The protein belongs to the ATPase alpha/beta chains family. In terms of assembly, F-type ATPases have 2 components, CF(1) - the catalytic core - and CF(0) - the membrane proton channel. CF(1) has five subunits: alpha(3), beta(3), gamma(1), delta(1), epsilon(1). CF(0) has three main subunits: a(1), b(2) and c(9-12). The alpha and beta chains form an alternating ring which encloses part of the gamma chain. CF(1) is attached to CF(0) by a central stalk formed by the gamma and epsilon chains, while a peripheral stalk is formed by the delta and b chains.

It is found in the cell membrane. The catalysed reaction is ATP + H2O + 4 H(+)(in) = ADP + phosphate + 5 H(+)(out). Produces ATP from ADP in the presence of a proton gradient across the membrane. The alpha chain is a regulatory subunit. This chain is ATP synthase subunit alpha, found in Mycobacterium leprae (strain Br4923).